Reading from the N-terminus, the 86-residue chain is MERNQRKTLYGRVVSDKMDKTITVVVETKRNHPVYGKRINYSKKYKAHDENNVAKEGDIVRIMETRPLSATKRFRLVEVVEKAVII.

The protein belongs to the universal ribosomal protein uS17 family. In terms of assembly, part of the 30S ribosomal subunit.

Its function is as follows. One of the primary rRNA binding proteins, it binds specifically to the 5'-end of 16S ribosomal RNA. The chain is Small ribosomal subunit protein uS17 from Streptococcus pyogenes serotype M3 (strain ATCC BAA-595 / MGAS315).